Here is a 330-residue protein sequence, read N- to C-terminus: Aspartate--ammonia ligase (330 aa).

This sequence belongs to the class-II aminoacyl-tRNA synthetase family. AsnA subfamily.

It is found in the cytoplasm. The catalysed reaction is L-aspartate + NH4(+) + ATP = L-asparagine + AMP + diphosphate + H(+). It functions in the pathway amino-acid biosynthesis; L-asparagine biosynthesis; L-asparagine from L-aspartate (ammonia route): step 1/1. In Photorhabdus laumondii subsp. laumondii (strain DSM 15139 / CIP 105565 / TT01) (Photorhabdus luminescens subsp. laumondii), this protein is Aspartate--ammonia ligase.